A 215-amino-acid polypeptide reads, in one-letter code: Ribonuclease T (215 aa).

One can recognise an Exonuclease domain in the interval 20-194 (VVIDVETAGF…YDTMQTAKLF (175 aa)). Mg(2+) contacts are provided by aspartate 23, glutamate 25, histidine 181, and aspartate 186. The Proton donor/acceptor role is filled by histidine 181.

Belongs to the RNase T family. Homodimer. Mg(2+) is required as a cofactor.

In terms of biological role, trims short 3' overhangs of a variety of RNA species, leaving a one or two nucleotide 3' overhang. Responsible for the end-turnover of tRNA: specifically removes the terminal AMP residue from uncharged tRNA (tRNA-C-C-A). Also appears to be involved in tRNA biosynthesis. This chain is Ribonuclease T, found in Yersinia enterocolitica serotype O:8 / biotype 1B (strain NCTC 13174 / 8081).